We begin with the raw amino-acid sequence, 151 residues long: MKTAVVLAAFSALMALARAQSPLASMGGGGSPMGMGMGMGMNRMMLPMLMGGMDMKHFALMNMLGGGGGMGGSRMLPLMAALRGNENMLPILLAAKGGMSNPLAMMAMLGGNDNLMNMLPLMMSSGMGMGGGGGMMRGAGAAGGGAAGPGM.

An N-terminal signal peptide occupies residues 1 to 19 (MKTAVVLAAFSALMALARA).

In terms of tissue distribution, component of the acid-insoluble and acid-soluble organic matrix of calcified layers of the shell (at protein level).

The protein localises to the secreted. This chain is Glycine and methionine-rich protein, found in Lottia gigantea (Giant owl limpet).